Consider the following 696-residue polypeptide: MKAPIPHLILLYATFTQSLKVVTKRGSADGCTDWSIDIKKYQVLVGEPVRIKCALFYGYIRTNYSLAQSAGLSLMWYKSSGPGDFEEPIAFDGSRMSKEEDSIWFRPTLLQDSGLYACVIRNSTYCMKVSISLTVGENDTGLCYNSKMKYFEKAELSKSKEISCRDIEDFLLPTREPEILWYKECRTKTWRPSIVFKRDTLLIREVREDDIGNYTCELKYGGFVVRRTTELTVTAPLTDKPPKLLYPVESKLTIQETQLGDSANLTCRAFFGYSGDVSPLIYWMKGEKFIEDLDENRVWESDIRILKEHLGEQEVSISLIVDSVEEGDLGNYSCYVENGNGRRHASVLLHKRELMYTVELAGGLGAILLLLVCLVTIYKCYKIEIMLFYRNHFGAEELDGDNKDYDAYLSYTKVDPDQWNQETGEEERFALEILPDMLEKHYGYKLFIPDRDLIPTGTYIEDVARCVDQSKRLIIVMTPNYVVRRGWSIFELETRLRNMLVTGEIKVILIECSELRGIMNYQEVEALKHTIKLLTVIKWHGPKCNKLNSKFWKRLQYEMPFKRIEPITHEQALDVSEQGPFGELQTVSAISMAAATSTALATAHPDLRSTFHNTYHSQMRQKHYYRSYEYDVPPTGTLPLTSIGNQHTYCNIPMTLINGQRPQTKSSREQNPDEAHTNSAILPLLPRETSISSVIW.

The N-terminal stretch at 1–18 (MKAPIPHLILLYATFTQS) is a signal peptide. The Ig-like 1 domain maps to 19 to 134 (LKVVTKRGSA…YCMKVSISLT (116 aa)). The Extracellular portion of the chain corresponds to 19–357 (LKVVTKRGSA…LLHKRELMYT (339 aa)). Cystine bridges form between Cys31-Cys126 and Cys53-Cys118. 3 N-linked (GlcNAc...) asparagine glycosylation sites follow: Asn63, Asn122, and Asn138. 2 disulfide bridges follow: Cys143/Cys185 and Cys164/Cys216. 2 consecutive Ig-like domains span residues 143–232 (CYNS…TELT) and 242–350 (PKLL…VLLH). 3 N-linked (GlcNAc...) asparagine glycosylation sites follow: Asn213, Asn264, and Asn331. A disulfide bond links Cys267 and Cys334. The chain crosses the membrane as a helical span at residues 358–378 (VELAGGLGAILLLLVCLVTIY). The Cytoplasmic portion of the chain corresponds to 379–696 (KCYKIEIMLF…RETSISSVIW (318 aa)). One can recognise a TIR domain in the interval 403–559 (KDYDAYLSYT…KFWKRLQYEM (157 aa)). Residue Glu491 is part of the active site. Positions 549-644 (SKFWKRLQYE…TGTLPLTSIG (96 aa)) are interaction with NCS1. The tract at residues 659 to 680 (GQRPQTKSSREQNPDEAHTNSA) is disordered. Over residues 666 to 676 (SSREQNPDEAH) the composition is skewed to basic and acidic residues.

It belongs to the interleukin-1 receptor family. In terms of assembly, homodimer. Interacts (calcium-independent) with NCS1/FREQ. Interacts (via the first immunoglobilin domain) with PTPRD (via the second immunoglobilin domain); this interaction is PTPRD-splicing-dependent and induces pre- and post-synaptic differentiation of neurons and is required for IL1RAPL1-mediated synapse formation.

The protein resides in the cell membrane. It localises to the cytoplasm. Its subcellular location is the cell projection. It is found in the axon. The protein localises to the dendrite. It carries out the reaction NAD(+) + H2O = ADP-D-ribose + nicotinamide + H(+). Its function is as follows. May regulate secretion and presynaptic differentiation through inhibition of the activity of N-type voltage-gated calcium channel. May activate the MAP kinase JNK. Plays a role in neurite outgrowth. During dendritic spine formation can bidirectionally induce pre- and post-synaptic differentiation of neurons by trans-synaptically binding to PTPRD. The polypeptide is Interleukin-1 receptor accessory protein-like 1 (IL1RAPL1) (Pongo pygmaeus (Bornean orangutan)).